We begin with the raw amino-acid sequence, 252 residues long: Iron-sulfur cluster co-chaperone protein HscB homolog (252 aa).

The transit peptide at 1-59 (MKKTKTMVASISTLIRRTYPSTNQCNSLATIQSQTQLPRESLQHHSSAEGRLRFSGRVF) directs the protein to the mitochondrion. A J domain is found at 93–165 (DYFQIFGLEK…LSRAMYIMKL (73 aa)).

Belongs to the HscB family. Interacts with ISU1 and HSP70-9/HSCA1.

The protein resides in the mitochondrion. The protein localises to the cytoplasm. It is found in the cytosol. Its function is as follows. Co-chaperone required for the assembly of iron-sulfur [Fe-S] clusters in both mitochondria and cytosol. Required for the activity of iron-sulfur proteins such as aconitase and succinate dehydrogenase. Involved in iron homeostasis and may take part in the control of iron translocation from roots to shoots. This Arabidopsis thaliana (Mouse-ear cress) protein is Iron-sulfur cluster co-chaperone protein HscB homolog.